The sequence spans 532 residues: Flavin-containing monooxygenase 3 (532 aa).

FAD-binding positions include 9–13 (GAGVS), glutamate 32, 40–41 (LW), and 61–62 (NS). NADP(+) is bound by residues 60-61 (TN) and 195-198 (SGCD). Serine 401 carries the phosphoserine modification. The helical transmembrane segment at 510–530 (FFFHWLKPFAIPILLIAVFLG) threads the bilayer.

Belongs to the FMO family. The cofactor is FAD. As to expression, liver.

The protein resides in the microsome membrane. Its subcellular location is the endoplasmic reticulum membrane. It carries out the reaction trimethylamine + NADPH + O2 = trimethylamine N-oxide + NADP(+) + H2O. The catalysed reaction is N,N-dimethylaniline + NADPH + O2 + H(+) = N,N-dimethylaniline N-oxide + NADP(+) + H2O. It catalyses the reaction hypotaurine + NADPH + O2 + H(+) = taurine + NADP(+) + H2O. The enzyme catalyses (S)-nicotine + NADPH + O2 = trans-(S)-nicotine N(1')-oxide + NADP(+) + H2O. It carries out the reaction albendazole + NADPH + O2 + H(+) = albendazole S-oxide + NADP(+) + H2O. Its function is as follows. Essential hepatic enzyme that catalyzes the oxygenation of a wide variety of nitrogen- and sulfur-containing compounds including drugs as well as dietary compounds. Plays an important role in the metabolism of trimethylamine (TMA), via the production of trimethylamine N-oxide (TMAO) metabolite. TMA is generated by the action of gut microbiota using dietary precursors such as choline, choline containing compounds, betaine or L-carnitine. By regulating TMAO concentration, FMO3 directly impacts both platelet responsiveness and rate of thrombus formation. The chain is Flavin-containing monooxygenase 3 (FMO3) from Macaca mulatta (Rhesus macaque).